The sequence spans 174 residues: Adipose-secreted signaling protein (174 aa).

Residue alanine 2 is modified to N-acetylalanine. Residue threonine 147 is modified to Phosphothreonine.

This sequence belongs to the ADISSP family.

Its subcellular location is the secreted. Functionally, adipocyte-secreted protein (adipokine) that acts as a key regulator for white adipose tissue (WAT) thermogenesis and glucose homeostasis at least in part through activation of protein kinase A (PKA). The sequence is that of Adipose-secreted signaling protein from Rattus norvegicus (Rat).